A 229-amino-acid polypeptide reads, in one-letter code: Flagellar L-ring protein (229 aa).

The signal sequence occupies residues 1-25; that stretch reads MKQVRLLPSAAVRAACALAAAALAG. Cysteine 26 carries N-palmitoyl cysteine lipidation. A lipid anchor (S-diacylglycerol cysteine) is attached at cysteine 26.

This sequence belongs to the FlgH family. As to quaternary structure, the basal body constitutes a major portion of the flagellar organelle and consists of four rings (L,P,S, and M) mounted on a central rod.

Its subcellular location is the cell outer membrane. The protein resides in the bacterial flagellum basal body. Its function is as follows. Assembles around the rod to form the L-ring and probably protects the motor/basal body from shearing forces during rotation. In Burkholderia multivorans (strain ATCC 17616 / 249), this protein is Flagellar L-ring protein.